We begin with the raw amino-acid sequence, 193 residues long: MFIVVEGIDGCGKSTVASLLAAEIGKKRPVFHTFEPGHVRDGLYRELIMENVDNPFVVAALFTIDRAEHVKKMIKPALAKGEWVVCERYADSTLAYQGYGMGLDKELINRMNEEAIDGLWPDKIFYLDIEPHLALARLQNKEKDALEGQGLEFLQRVREGYEEIARTRGYIYMDATLPPEIIVKRILEEVKLQ.

7–14 (GIDGCGKS) lines the ATP pocket.

It belongs to the thymidylate kinase family.

The enzyme catalyses dTMP + ATP = dTDP + ADP. Phosphorylation of dTMP to form dTDP in both de novo and salvage pathways of dTTP synthesis. This is Thymidylate kinase from Coprothermobacter proteolyticus (strain ATCC 35245 / DSM 5265 / OCM 4 / BT).